Here is a 239-residue protein sequence, read N- to C-terminus: U-scoloptoxin(11)-Sm3a (239 aa).

A signal peptide spans 1–16; it reads MINFLLLVLILSVLES.

This sequence belongs to the scoloptoxin-11 family. In terms of processing, contains 9 disulfide bonds. As to expression, expressed by the venom gland.

The protein localises to the secreted. The protein is U-scoloptoxin(11)-Sm3a of Scolopendra morsitans (Tanzanian blue ringleg centipede).